A 635-amino-acid polypeptide reads, in one-letter code: Biosynthetic arginine decarboxylase (635 aa).

An N6-(pyridoxal phosphate)lysine modification is found at Lys-100. Position 282–292 (282–292 (VDIGGGLGVDY)) interacts with substrate.

The protein belongs to the Orn/Lys/Arg decarboxylase class-II family. SpeA subfamily. Mg(2+) serves as cofactor. It depends on pyridoxal 5'-phosphate as a cofactor.

The enzyme catalyses L-arginine + H(+) = agmatine + CO2. It participates in amine and polyamine biosynthesis; agmatine biosynthesis; agmatine from L-arginine: step 1/1. Catalyzes the biosynthesis of agmatine from arginine. In Geobacter metallireducens (strain ATCC 53774 / DSM 7210 / GS-15), this protein is Biosynthetic arginine decarboxylase.